A 790-amino-acid chain; its full sequence is LPS-assembly protein LptD (790 aa).

Positions Met-1–Ala-20 are cleaved as a signal peptide.

Belongs to the LptD family. In terms of assembly, component of the lipopolysaccharide transport and assembly complex. Interacts with LptE and LptA.

It localises to the cell outer membrane. Together with LptE, is involved in the assembly of lipopolysaccharide (LPS) at the surface of the outer membrane. The sequence is that of LPS-assembly protein LptD from Bordetella parapertussis (strain 12822 / ATCC BAA-587 / NCTC 13253).